A 188-amino-acid chain; its full sequence is Thymidine kinase (188 aa).

17-24 (GPMFAGKT) provides a ligand contact to ATP. Glu-92 serves as the catalytic Proton acceptor. Phe-121 is a substrate binding site. Zn(2+) contacts are provided by Cys-146 and Cys-149. Substrate is bound at residue 166–170 (LILAG). Residues Cys-179 and Cys-182 each contribute to the Zn(2+) site.

It belongs to the thymidine kinase family.

It carries out the reaction thymidine + ATP = dTMP + ADP + H(+). Phosphorylates thymidine. ASFV replicates in the cytoplasm of infected cells and contains genes encoding a number of enzymes needed for DNA synthesis, including thymidine kinase. Important for growth in swine macrophages in vitro and is a virus virulence factor in swine. The sequence is that of Thymidine kinase from Ornithodoros (relapsing fever ticks).